Reading from the N-terminus, the 204-residue chain is Small ribosomal subunit protein uS4 (204 aa).

The S4 RNA-binding domain occupies 93 to 156; that stretch reads SRLSSVLYHS…AKIPVIVEAV (64 aa).

This sequence belongs to the universal ribosomal protein uS4 family. In terms of assembly, part of the 30S ribosomal subunit. Contacts protein S5. The interaction surface between S4 and S5 is involved in control of translational fidelity.

Its function is as follows. One of the primary rRNA binding proteins, it binds directly to 16S rRNA where it nucleates assembly of the body of the 30S subunit. Functionally, with S5 and S12 plays an important role in translational accuracy. The polypeptide is Small ribosomal subunit protein uS4 (Wolbachia sp. subsp. Brugia malayi (strain TRS)).